We begin with the raw amino-acid sequence, 274 residues long: Large ribosomal subunit protein uL2c (274 aa).

2 disordered regions span residues 1-22 (MAIHLYKTSTPSTRNGAVDNQV) and 225-274 (PVDH…RRSK).

This sequence belongs to the universal ribosomal protein uL2 family. As to quaternary structure, part of the 50S ribosomal subunit.

The protein localises to the plastid. It localises to the chloroplast. The chain is Large ribosomal subunit protein uL2c (rpl2) from Silene latifolia (White campion).